Consider the following 127-residue polypeptide: Large ribosomal subunit protein bL17 (127 aa).

It belongs to the bacterial ribosomal protein bL17 family. Part of the 50S ribosomal subunit. Contacts protein L32.

The polypeptide is Large ribosomal subunit protein bL17 (Escherichia fergusonii (strain ATCC 35469 / DSM 13698 / CCUG 18766 / IAM 14443 / JCM 21226 / LMG 7866 / NBRC 102419 / NCTC 12128 / CDC 0568-73)).